The sequence spans 354 residues: DNA integrity scanning protein DisA (354 aa).

The 139-residue stretch at 6 to 144 (GMKIKDTLKI…GDIKYVLRDS (139 aa)) folds into the DAC domain. ATP contacts are provided by residues Gly-73, Leu-91, and 104 to 108 (TRHRT).

The protein belongs to the DisA family. As to quaternary structure, homooctamer. Requires Mg(2+) as cofactor.

It catalyses the reaction 2 ATP = 3',3'-c-di-AMP + 2 diphosphate. In terms of biological role, participates in a DNA-damage check-point that is active prior to asymmetric division when DNA is damaged. DisA forms globular foci that rapidly scan along the chromosomes during sporulation, searching for lesions. When a lesion is present, DisA pauses at the lesion site. This triggers a cellular response that culminates in a temporary block in sporulation initiation. Also has diadenylate cyclase activity, catalyzing the condensation of 2 ATP molecules into cyclic di-AMP (c-di-AMP). c-di-AMP acts as a signaling molecule that couples DNA integrity with progression of sporulation. The rise in c-di-AMP level generated by DisA while scanning the chromosome, operates as a positive signal that advances sporulation; upon encountering a lesion, the DisA focus arrests at the damaged site and halts c-di-AMP synthesis. The chain is DNA integrity scanning protein DisA from Clostridium botulinum (strain Eklund 17B / Type B).